The following is a 60-amino-acid chain: Disagregin (60 aa).

The Cell attachment site; atypical motif lies at 14–16; the sequence is RED.

As to expression, expressed in salivary glands.

It is found in the secreted. Tick salivary platelet aggregation inhibitor that plays an important part in the anti-hemostatic strategy of ticks. Inhibits fibrinogen interaction with platelets. Acts by binding (in a divalent metal ion dependent manner) to the glycoprotein IIb-IIIa receptor (ITGA2B/ITGB3) on the platelet surface and inhibits aggregation induced by ADP (IC(50)=99-104 nM), thrombin, collagen (IC(50)=64 nM) platelet-activating factor and collagen. Interacts to unstimulated platelets (Kd=42.5 nM) and to ADP-stimulated platelets (Kd=39.4 nM). In contrast to many disintegrins which only interact with the beta-3 subunit, interacts with the two subunits (alpha-IIb and beta-3). Under flow conditions, reduces and delays platelet adhesion, aggregation, and fibrin formation. The protein is Disagregin of Ornithodoros moubata (Soft tick).